A 313-amino-acid chain; its full sequence is Acetyl-coenzyme A carboxylase carboxyl transferase subunit alpha (313 aa).

One can recognise a CoA carboxyltransferase C-terminal domain in the interval Lys34 to Glu288.

This sequence belongs to the AccA family. Acetyl-CoA carboxylase is a heterohexamer composed of biotin carboxyl carrier protein (AccB), biotin carboxylase (AccC) and two subunits each of ACCase subunit alpha (AccA) and ACCase subunit beta (AccD).

The protein resides in the cytoplasm. The catalysed reaction is N(6)-carboxybiotinyl-L-lysyl-[protein] + acetyl-CoA = N(6)-biotinyl-L-lysyl-[protein] + malonyl-CoA. The protein operates within lipid metabolism; malonyl-CoA biosynthesis; malonyl-CoA from acetyl-CoA: step 1/1. Functionally, component of the acetyl coenzyme A carboxylase (ACC) complex. First, biotin carboxylase catalyzes the carboxylation of biotin on its carrier protein (BCCP) and then the CO(2) group is transferred by the carboxyltransferase to acetyl-CoA to form malonyl-CoA. The protein is Acetyl-coenzyme A carboxylase carboxyl transferase subunit alpha of Fusobacterium nucleatum subsp. nucleatum (strain ATCC 25586 / DSM 15643 / BCRC 10681 / CIP 101130 / JCM 8532 / KCTC 2640 / LMG 13131 / VPI 4355).